The sequence spans 99 residues: Co-chaperonin GroES (99 aa).

It belongs to the GroES chaperonin family. In terms of assembly, heptamer of 7 subunits arranged in a ring. Interacts with the chaperonin GroEL.

Its subcellular location is the cytoplasm. In terms of biological role, together with the chaperonin GroEL, plays an essential role in assisting protein folding. The GroEL-GroES system forms a nano-cage that allows encapsulation of the non-native substrate proteins and provides a physical environment optimized to promote and accelerate protein folding. GroES binds to the apical surface of the GroEL ring, thereby capping the opening of the GroEL channel. The chain is Co-chaperonin GroES from Corynebacterium efficiens (strain DSM 44549 / YS-314 / AJ 12310 / JCM 11189 / NBRC 100395).